The primary structure comprises 340 residues: Phosphate acyltransferase (340 aa).

The protein belongs to the PlsX family. Homodimer. Probably interacts with PlsY.

Its subcellular location is the cytoplasm. The enzyme catalyses a fatty acyl-[ACP] + phosphate = an acyl phosphate + holo-[ACP]. It functions in the pathway lipid metabolism; phospholipid metabolism. Catalyzes the reversible formation of acyl-phosphate (acyl-PO(4)) from acyl-[acyl-carrier-protein] (acyl-ACP). This enzyme utilizes acyl-ACP as fatty acyl donor, but not acyl-CoA. The sequence is that of Phosphate acyltransferase from Leptospira biflexa serovar Patoc (strain Patoc 1 / ATCC 23582 / Paris).